Consider the following 593-residue polypeptide: Protein GAMETE EXPRESSED 1 (593 aa).

The signal sequence occupies residues 1–24 (MDRFSRKCLLFLLLIILLDSPLTC). Topologically, residues 25–427 (HSWGWFSSSS…LHNAMLLESR (403 aa)) are extracellular. Coiled coils occupy residues 156-194 (CQQLQSNAFKNEIERLVNELKNTAQYTEDKLDILESKSD) and 350-387 (EALQESRNTLQRLKEFSQEQQEDLAKRQEKLQEVHDHL). The helical transmembrane segment at 428 to 448 (VIKAFVIYFLSIFVIYMFTST) threads the bilayer. Residues 449–457 (KQTYIIRPR) lie on the Cytoplasmic side of the membrane. Residues 458–476 (LYIGLCVTLALEVASLRYV) traverse the membrane as a helical segment. The Extracellular portion of the chain corresponds to 477–485 (NDTERQAWM). A helical transmembrane segment spans residues 486-506 (INLIRSLFALLASAQLLHAAL). At 507 to 593 (SYRDYEVLNH…TRRLYNFRPR (87 aa)) the chain is on the cytoplasmic side.

In terms of assembly, homodimer. In tricellular pollen, expressed in mature sperm cells. Not expressed in bicellular or unicellular pollen. Detected in ovules, roots and guard cells. Expressed in the embryo sac before cellularization, in the egg cell after cellularization, in the zygote/embryo immediately after fertilization and in the pollen vegetative cell.

The protein resides in the cell membrane. Functionally, has a dual function during gametophyte development and early embryogenesis. Required for correct pollen maturation. In Arabidopsis thaliana (Mouse-ear cress), this protein is Protein GAMETE EXPRESSED 1 (GEX1).